Here is a 159-residue protein sequence, read N- to C-terminus: 3-dehydroquinate dehydratase (159 aa).

Tyr22 serves as the catalytic Proton acceptor. Substrate-binding residues include Asn73, His79, and Asp86. His99 serves as the catalytic Proton donor. Residues 100-101 (IS) and Arg110 contribute to the substrate site.

This sequence belongs to the type-II 3-dehydroquinase family. As to quaternary structure, homododecamer.

It carries out the reaction 3-dehydroquinate = 3-dehydroshikimate + H2O. Its pathway is metabolic intermediate biosynthesis; chorismate biosynthesis; chorismate from D-erythrose 4-phosphate and phosphoenolpyruvate: step 3/7. In terms of biological role, catalyzes a trans-dehydration via an enolate intermediate. The polypeptide is 3-dehydroquinate dehydratase (Campylobacter jejuni subsp. doylei (strain ATCC BAA-1458 / RM4099 / 269.97)).